Here is a 367-residue protein sequence, read N- to C-terminus: Ferrochelatase (367 aa).

Fe cation-binding residues include histidine 213 and glutamate 294.

It belongs to the ferrochelatase family.

The protein localises to the cytoplasm. It catalyses the reaction heme b + 2 H(+) = protoporphyrin IX + Fe(2+). Its pathway is porphyrin-containing compound metabolism; protoheme biosynthesis; protoheme from protoporphyrin-IX: step 1/1. Catalyzes the ferrous insertion into protoporphyrin IX. This Polaromonas sp. (strain JS666 / ATCC BAA-500) protein is Ferrochelatase.